The primary structure comprises 475 residues: Coagulation factor X (475 aa).

Residues 1-20 (MAGRLLLLLLCAALPDELRA) form the signal peptide. The propeptide occupies 21–40 (EGGVFIKKESADKFLERTKR). The Gla domain occupies 41 to 85 (ANSFLEEMKQGNIERECNEERCSKEEAREAFEDNEKTEEFWNIYV). 11 positions are modified to 4-carboxyglutamate: Glu46, Glu47, Glu54, Glu56, Glu59, Glu60, Glu65, Glu66, Glu69, Glu72, and Glu79. Cys57 and Cys62 are oxidised to a cystine. The EGF-like 1; calcium-binding domain maps to 86–122 (DGDQCSSNPCHYGGQCKDGLGSYTCSCLDGYQGKNCE). Intrachain disulfides connect Cys90–Cys101, Cys95–Cys110, Cys112–Cys121, Cys129–Cys140, Cys136–Cys152, Cys154–Cys167, Cys175–Cys348, Cys247–Cys252, Cys267–Cys283, Cys396–Cys410, and Cys421–Cys449. Residue Asp103 is modified to (3R)-3-hydroxyaspartate. The EGF-like 2 domain maps to 125–168 (IPKYCKINNGDCEQFCSIKKSVQKDVVCSCTSGYELAEDGKQCV). Positions 186–240 (SVILPTNSNTNATSDQDVPSTNGSILEEVFTTTTESPTPPPRNGSSITDPNVDTR) are cleaved as a propeptide — activation peptide. 3 N-linked (GlcNAc...) asparagine glycosylation sites follow: Asn196, Asn207, and Asn228. The tract at residues 216–237 (TTTTESPTPPPRNGSSITDPNV) is disordered. In terms of domain architecture, Peptidase S1 spans 241 to 473 (IVGGDECRPG…FLRWVRTVMR (233 aa)). The active-site Charge relay system is His282. N-linked (GlcNAc...) asparagine glycosylation is present at Asn285. Catalysis depends on Asp328, which acts as the Charge relay system. Catalysis depends on Ser425, which acts as the Charge relay system.

The protein belongs to the peptidase S1 family. As to quaternary structure, the two chains are formed from a single-chain precursor by the excision of two Arg residues and are held together by 1 or more disulfide bonds. In terms of processing, the vitamin K-dependent, enzymatic carboxylation of some glutamate residues allows the modified protein to bind calcium. Post-translationally, the activation peptide is cleaved by factor IXa (in the intrinsic pathway), or by factor VIIa (in the extrinsic pathway). The iron and 2-oxoglutarate dependent 3-hydroxylation of aspartate and asparagine is (R) stereospecific within EGF domains. As to expression, liver and chorioallantoic membrane.

It localises to the secreted. The catalysed reaction is Selective cleavage of Arg-|-Thr and then Arg-|-Ile bonds in prothrombin to form thrombin.. Its function is as follows. Factor Xa is a vitamin K-dependent glycoprotein that converts prothrombin to thrombin in the presence of factor Va, calcium and phospholipid during blood clotting. VAP cleaves the fusion proteins of Sendai virus, NDV, and influenza virus a at a specific single arginine-containing site, and plays a key role in the viral spreading in the allantoic sac. The polypeptide is Coagulation factor X (F10) (Gallus gallus (Chicken)).